The following is a 262-amino-acid chain: Indole-3-glycerol phosphate synthase (262 aa).

Belongs to the TrpC family.

It catalyses the reaction 1-(2-carboxyphenylamino)-1-deoxy-D-ribulose 5-phosphate + H(+) = (1S,2R)-1-C-(indol-3-yl)glycerol 3-phosphate + CO2 + H2O. Its pathway is amino-acid biosynthesis; L-tryptophan biosynthesis; L-tryptophan from chorismate: step 4/5. The chain is Indole-3-glycerol phosphate synthase from Nitratiruptor sp. (strain SB155-2).